A 401-amino-acid polypeptide reads, in one-letter code: MKPLLIFLIAGEPSGDVLGGRLMAALREAMEGHVEFAGVGGPRMAEQGLQSLFPMEDLALFGLAELLPRLPTLLKRLDQTTKAVLERTPDAVVSIDAPDFCFRVEQRLRRAGARMPLIHYVAPTVWAWRPGRARKVAKFLDHLLALLPFEPPYFEAVGLPCTFVGHPVVESGADAGDGERFRRRHGIAPDATVLTVLPGSRRSEVTKLLPDFGATLEILASRYPDLQVVVPTVPGVAETVAEAVQSWPVPAITLLGDADKYDAFAASTAALAASGTVALELALARVPAVIAYRIHPVSHALYRRFIRVRYVNLVNIMLDRPLVPELLQQDCTPDRLALAVDRLLNEPSARQEQIDGVTEVARWLGQGDVPPSRRAAEAVLNVITKRVIADRQGQTPGRSRS.

The protein belongs to the LpxB family.

The catalysed reaction is a lipid X + a UDP-2-N,3-O-bis[(3R)-3-hydroxyacyl]-alpha-D-glucosamine = a lipid A disaccharide + UDP + H(+). The protein operates within bacterial outer membrane biogenesis; LPS lipid A biosynthesis. In terms of biological role, condensation of UDP-2,3-diacylglucosamine and 2,3-diacylglucosamine-1-phosphate to form lipid A disaccharide, a precursor of lipid A, a phosphorylated glycolipid that anchors the lipopolysaccharide to the outer membrane of the cell. This Rhodospirillum centenum (strain ATCC 51521 / SW) protein is Lipid-A-disaccharide synthase.